A 455-amino-acid chain; its full sequence is 2-oxoisovalerate dehydrogenase subunit alpha, mitochondrial (455 aa).

A mitochondrion-targeting transit peptide spans 1-55; the sequence is MQGSAKMAMAVAVAVARVWRPSRGLGRTGLPLLRLLGARGLARFHPHRWQQQQHF. Thiamine diphosphate-binding residues include Tyr-168 and Arg-169. Ser-216 is a binding site for K(+). Position 217 (Ser-217) interacts with thiamine diphosphate. K(+) contacts are provided by Pro-218, Thr-221, and Gln-222. Glu-248 contacts Mg(2+). Residues Gly-249, Ala-250, and Arg-275 each contribute to the thiamine diphosphate site. The Mg(2+) site is built by Asn-277 and Tyr-279. His-346 lines the thiamine diphosphate pocket. Ser-347 carries the phosphoserine; by BCKDK modification. Thr-348 is subject to Phosphothreonine. 2 positions are modified to phosphoserine: Ser-349 and Ser-357. Lys-366 is modified (N6-acetyllysine; alternate). An N6-succinyllysine; alternate modification is found at Lys-366. Lys-390 is modified (N6-succinyllysine).

The protein belongs to the BCKDHA family. As to quaternary structure, heterotetramer of 2 alpha/BCKDHA and 2 beta chains/BCKDHB that forms the branched-chain alpha-keto acid decarboxylase (E1) component of the BCKD complex. The branched-chain alpha-ketoacid dehydrogenase is a large complex composed of three major building blocks E1, E2 and E3. It is organized around E2, a 24-meric cubic core composed of DBT, to which are associated 6 to 12 copies of E1, and approximately 6 copies of the dehydrogenase E3, a DLD dimer. Interacts with PPM1K. Requires thiamine diphosphate as cofactor. Mg(2+) is required as a cofactor. Phosphorylated at Ser-347 by BCKDK and dephosphorylated by protein phosphatase PPM1K. In terms of tissue distribution, expressed in kidney (at protein level).

The protein localises to the mitochondrion matrix. It carries out the reaction N(6)-[(R)-lipoyl]-L-lysyl-[protein] + 3-methyl-2-oxobutanoate + H(+) = N(6)-[(R)-S(8)-2-methylpropanoyldihydrolipoyl]-L-lysyl-[protein] + CO2. Its function is as follows. Together with BCKDHB forms the heterotetrameric E1 subunit of the mitochondrial branched-chain alpha-ketoacid dehydrogenase (BCKD) complex. The BCKD complex catalyzes the multi-step oxidative decarboxylation of alpha-ketoacids derived from the branched-chain amino-acids valine, leucine and isoleucine producing CO2 and acyl-CoA which is subsequently utilized to produce energy. The E1 subunit catalyzes the first step with the decarboxylation of the alpha-ketoacid forming an enzyme-product intermediate. A reductive acylation mediated by the lipoylamide cofactor of E2 extracts the acyl group from the E1 active site for the next step of the reaction. The sequence is that of 2-oxoisovalerate dehydrogenase subunit alpha, mitochondrial (BCKDHA) from Bos taurus (Bovine).